A 256-amino-acid polypeptide reads, in one-letter code: 6-carboxyhexanoate--CoA ligase (256 aa).

This sequence belongs to the BioW family. As to quaternary structure, homodimer. It depends on Mg(2+) as a cofactor.

The enzyme catalyses heptanedioate + ATP + CoA = 6-carboxyhexanoyl-CoA + AMP + diphosphate. Its pathway is metabolic intermediate metabolism; pimeloyl-CoA biosynthesis; pimeloyl-CoA from pimelate: step 1/1. Its function is as follows. Catalyzes the transformation of pimelate into pimeloyl-CoA with concomitant hydrolysis of ATP to AMP. This is 6-carboxyhexanoate--CoA ligase from Bacillus velezensis (strain DSM 23117 / BGSC 10A6 / LMG 26770 / FZB42) (Bacillus amyloliquefaciens subsp. plantarum).